A 550-amino-acid chain; its full sequence is Chaperonin GroEL 2 (550 aa).

ATP-binding positions include 30-33, Lys-51, 87-91, Gly-415, 480-482, and Asp-496; these read TLGP, DGTTT, and NAA.

It belongs to the chaperonin (HSP60) family. Forms a cylinder of 14 subunits composed of two heptameric rings stacked back-to-back. Interacts with the co-chaperonin GroES.

It is found in the cytoplasm. It carries out the reaction ATP + H2O + a folded polypeptide = ADP + phosphate + an unfolded polypeptide.. Together with its co-chaperonin GroES, plays an essential role in assisting protein folding. The GroEL-GroES system forms a nano-cage that allows encapsulation of the non-native substrate proteins and provides a physical environment optimized to promote and accelerate protein folding. This Erythrobacter litoralis (strain HTCC2594) protein is Chaperonin GroEL 2.